The chain runs to 123 residues: MPTINQLVRKPRKSRSALNKAPALQHNPQKRAVCVKVYTTTPKKPNSALRKVARVKIAGYGSEVIAYIPGEGHNLQEHSVVLIRGGRVKDLPGVRYHIIRGALDSRGVQNRKKARSKYGVKKS.

The tract at residues M1–Q25 is disordered. D90 is subject to 3-methylthioaspartic acid.

This sequence belongs to the universal ribosomal protein uS12 family. In terms of assembly, part of the 30S ribosomal subunit. Contacts proteins S8 and S17. May interact with IF1 in the 30S initiation complex.

In terms of biological role, with S4 and S5 plays an important role in translational accuracy. Its function is as follows. Interacts with and stabilizes bases of the 16S rRNA that are involved in tRNA selection in the A site and with the mRNA backbone. Located at the interface of the 30S and 50S subunits, it traverses the body of the 30S subunit contacting proteins on the other side and probably holding the rRNA structure together. The combined cluster of proteins S8, S12 and S17 appears to hold together the shoulder and platform of the 30S subunit. This is Small ribosomal subunit protein uS12 from Ehrlichia canis (strain Jake).